The primary structure comprises 266 residues: Signal peptidase I (266 aa).

Residues 1–20 (MQTDNTKSNTNKTAKQEWGS) are Cytoplasmic-facing. Residues 21 to 41 (FAFVICIALLIRILIMEPFNV) traverse the membrane as a helical segment. At 42-266 (PTGSMKATIL…IFRNLYNTDA (225 aa)) the chain is on the extracellular side. Catalysis depends on residues S45 and K108.

It belongs to the peptidase S26 family.

Its subcellular location is the cell membrane. The enzyme catalyses Cleavage of hydrophobic, N-terminal signal or leader sequences from secreted and periplasmic proteins.. This Rickettsia conorii (strain ATCC VR-613 / Malish 7) protein is Signal peptidase I (lepB).